We begin with the raw amino-acid sequence, 120 residues long: Nitrogen regulatory protein GlnK1 (120 aa).

ADP-binding positions include T40, 48–50 (GEQ), V75, and 98–101 (GDGR). ATP is bound by residues T40, 48-50 (GEQ), V75, and 98-101 (GDGR).

The protein belongs to the P(II) protein family. As to quaternary structure, homotrimer. Interacts and forms a complex with Amt1.

Its subcellular location is the cytoplasm. Involved in the regulation of nitrogen metabolism. Regulates the activity of its targets by protein-protein interaction in response to the nitrogen status of the cell. Regulates the activity of the ammonia channel Amt1 via direct interaction. In Archaeoglobus fulgidus (strain ATCC 49558 / DSM 4304 / JCM 9628 / NBRC 100126 / VC-16), this protein is Nitrogen regulatory protein GlnK1.